Here is a 218-residue protein sequence, read N- to C-terminus: Small ribosomal subunit protein uS3c (218 aa).

Positions 43 to 118 (IKNYVQKNTK…KFNIAITKIA (76 aa)) constitute a KH type-2 domain.

The protein belongs to the universal ribosomal protein uS3 family. As to quaternary structure, part of the 30S ribosomal subunit.

The protein resides in the plastid. Its subcellular location is the chloroplast. In Coffea arabica (Arabian coffee), this protein is Small ribosomal subunit protein uS3c (rps3).